The primary structure comprises 429 residues: Chaperone SurA (429 aa).

Positions 1–19 (MKKTLLALLIASVMQSALA) are cleaved as a signal peptide. PpiC domains lie at 172–273 (RTEY…KLVD) and 283–381 (VEQY…LVEG).

It is found in the periplasm. It carries out the reaction [protein]-peptidylproline (omega=180) = [protein]-peptidylproline (omega=0). Functionally, chaperone involved in the correct folding and assembly of outer membrane proteins. Recognizes specific patterns of aromatic residues and the orientation of their side chains, which are found more frequently in integral outer membrane proteins. May act in both early periplasmic and late outer membrane-associated steps of protein maturation. In Chromobacterium violaceum (strain ATCC 12472 / DSM 30191 / JCM 1249 / CCUG 213 / NBRC 12614 / NCIMB 9131 / NCTC 9757 / MK), this protein is Chaperone SurA.